Here is a 117-residue protein sequence, read N- to C-terminus: Large ribosomal subunit protein uL18 (117 aa).

It belongs to the universal ribosomal protein uL18 family. As to quaternary structure, part of the 50S ribosomal subunit; part of the 5S rRNA/L5/L18/L25 subcomplex. Contacts the 5S and 23S rRNAs.

Functionally, this is one of the proteins that bind and probably mediate the attachment of the 5S RNA into the large ribosomal subunit, where it forms part of the central protuberance. The chain is Large ribosomal subunit protein uL18 from Azoarcus sp. (strain BH72).